The following is a 121-amino-acid chain: Autophagy-related protein 8f (121 aa).

Residue Gly-117 is the site of Phosphatidylethanolamine amidated glycine attachment. Residues 118–121 constitute a propeptide, removed in mature form; the sequence is FGSP.

It belongs to the ATG8 family. Interacts with ATG4. Interacts with NBR1. Interacts with ATI1 and ATI2. Interacts with SH3P2. In terms of processing, the C-terminal 4 residues are removed by ATG4 to expose Gly-117 at the C-terminus. This Gly-117 forms then a thioester bond with the 'Cys-558' of ATG7 (E1-like activating enzyme) before being transferred to the 'Cys-258' of ATG3 (the specific E2 conjugating enzyme), in order to be finally amidated with phosphatidylethanolamine. This lipid modification anchors ATG8 to autophagosomes. Constitutively expressed.

It localises to the cytoplasmic vesicle. Its subcellular location is the autophagosome membrane. It is found in the vacuole membrane. The protein localises to the cytoplasm. The protein resides in the cytoskeleton. Functionally, ubiquitin-like modifier involved in autophagosomes formation. May mediate the delivery of the autophagosomes to the vacuole via the microtubule cytoskeleton. The sequence is that of Autophagy-related protein 8f (ATG8F) from Arabidopsis thaliana (Mouse-ear cress).